The primary structure comprises 172 residues: Thioredoxin M-type, chloroplastic (172 aa).

The N-terminal 60 residues, 1–60 (MALESLFKSIHTKTSLSSSIVFIFKGKACLLTSKSRIQESFAELNSFTSLVLLIENHVLL), are a transit peptide targeting the chloroplast. The 112-residue stretch at 61-172 (HAREAVNEVQ…TLSEKVEKYI (112 aa)) folds into the Thioredoxin domain. Catalysis depends on nucleophile residues cysteine 97 and cysteine 100. Cysteine 97 and cysteine 100 are joined by a disulfide.

The protein belongs to the thioredoxin family. Plant M-type subfamily. As to quaternary structure, forms a complex with heterodimeric ferredoxin-thioredoxin reductase (FTR) and ferredoxin.

Its subcellular location is the plastid. The protein resides in the chloroplast. In terms of biological role, participates in various redox reactions through the reversible oxidation of the active center dithiol to a disulfide. The M form is known to activate NADP-malate dehydrogenase. In Pisum sativum (Garden pea), this protein is Thioredoxin M-type, chloroplastic.